Here is a 944-residue protein sequence, read N- to C-terminus: Neutral alpha-glucosidase AB (944 aa).

The first 32 residues, 1-32 (MAAVAAVAARRRRSWTGLVLACLGVCLGLTLA), serve as a signal peptide directing secretion. An intrachain disulfide couples cysteine 41 to cysteine 47. Serine 52 is subject to Phosphoserine. A glycan (N-linked (GlcNAc...) asparagine) is linked at asparagine 97. A disordered region spans residues 181–225 (QRAPRVSQGSKDPAEGDGAQPEEAPGDGDKPEEIQGKAEKDEPGA). Residues 207–225 (DGDKPEEIQGKAEKDEPGA) show a composition bias toward basic and acidic residues. 2 residues coordinate substrate: aspartate 283 and aspartate 429. The active-site Nucleophile is the aspartate 542. A substrate-binding site is contributed by arginine 602. Aspartate 618 acts as the Proton donor in catalysis. The cysteines at positions 633 and 644 are disulfide-linked. Substrate is bound at residue histidine 676.

Belongs to the glycosyl hydrolase 31 family. In terms of assembly, heterodimer of a catalytic alpha subunit (GANAB) and a beta subunit (PRKCSH). Binds glycosylated PTPRC. Post-translationally, contains sialylated polysaccharide chains.

The protein resides in the endoplasmic reticulum. It is found in the golgi apparatus. The protein localises to the melanosome. It carries out the reaction N(4)-(alpha-D-Glc-(1-&gt;3)-alpha-D-Man-(1-&gt;2)-alpha-D-Man-(1-&gt;2)-alpha-D-Man-(1-&gt;3)-[alpha-D-Man-(1-&gt;2)-alpha-D-Man-(1-&gt;3)-[alpha-D-Man-(1-&gt;2)-alpha-D-Man-(1-&gt;6)]-alpha-D-Man-(1-&gt;6)]-beta-D-Man-(1-&gt;4)-beta-D-GlcNAc-(1-&gt;4)-beta-D-GlcNAc)-L-asparaginyl-[protein] + H2O = N(4)-(alpha-D-Man-(1-&gt;2)-alpha-D-Man-(1-&gt;2)-alpha-D-Man-(1-&gt;3)-[alpha-D-Man-(1-&gt;2)-alpha-D-Man-(1-&gt;3)-[alpha-D-Man-(1-&gt;2)-alpha-D-Man-(1-&gt;6)]-alpha-D-Man-(1-&gt;6)]-beta-D-Man-(1-&gt;4)-beta-D-GlcNAc-(1-&gt;4)-beta-D-GlcNAc)-L-asparaginyl-[protein] (N-glucan mannose isomer 9A1,2,3B1,2,3) + beta-D-glucose. The catalysed reaction is N(4)-(alpha-D-Glc-(1-&gt;3)-alpha-D-Glc-(1-&gt;3)-alpha-D-Man-(1-&gt;2)-alpha-D-Man-(1-&gt;2)-alpha-D-Man-(1-&gt;3)-[alpha-D-Man-(1-&gt;2)-alpha-D-Man-(1-&gt;3)-[alpha-D-Man-(1-&gt;2)-alpha-D-Man-(1-&gt;6)]-alpha-D-Man-(1-&gt;6)]-beta-D-Man-(1-&gt;4)-beta-D-GlcNAc-(1-&gt;4)-beta-D-GlcNAc)-L-asparaginyl-[protein] + H2O = N(4)-(alpha-D-Glc-(1-&gt;3)-alpha-D-Man-(1-&gt;2)-alpha-D-Man-(1-&gt;2)-alpha-D-Man-(1-&gt;3)-[alpha-D-Man-(1-&gt;2)-alpha-D-Man-(1-&gt;3)-[alpha-D-Man-(1-&gt;2)-alpha-D-Man-(1-&gt;6)]-alpha-D-Man-(1-&gt;6)]-beta-D-Man-(1-&gt;4)-beta-D-GlcNAc-(1-&gt;4)-beta-D-GlcNAc)-L-asparaginyl-[protein] + beta-D-glucose. Its pathway is glycan metabolism; N-glycan metabolism. Its function is as follows. Catalytic subunit of glucosidase II that cleaves sequentially the 2 innermost alpha-1,3-linked glucose residues from the Glc(2)Man(9)GlcNAc(2) oligosaccharide precursor of immature glycoproteins. Required for PKD1/Polycystin-1 and PKD2/Polycystin-2 maturation and localization to the cell surface and cilia. This chain is Neutral alpha-glucosidase AB (GANAB), found in Sus scrofa (Pig).